Consider the following 158-residue polypeptide: GTP-dependent dephospho-CoA kinase (158 aa).

GTP-binding residues include D35, V36, D54, K56, E109, and D132.

It belongs to the GTP-dependent DPCK family.

It catalyses the reaction 3'-dephospho-CoA + GTP = GDP + CoA + H(+). It functions in the pathway cofactor biosynthesis; coenzyme A biosynthesis. In terms of biological role, catalyzes the GTP-dependent phosphorylation of the 3'-hydroxyl group of dephosphocoenzyme A to form coenzyme A (CoA). The polypeptide is GTP-dependent dephospho-CoA kinase (Methanococcus maripaludis (strain C7 / ATCC BAA-1331)).